Reading from the N-terminus, the 215-residue chain is Ribonuclease T (215 aa).

The Exonuclease domain occupies 20-194; that stretch reads VVIDVETAGF…YDTERTAVLF (175 aa). Mg(2+) is bound by residues aspartate 23, glutamate 25, histidine 181, and aspartate 186. The active-site Proton donor/acceptor is histidine 181.

This sequence belongs to the RNase T family. Homodimer. It depends on Mg(2+) as a cofactor.

Trims short 3' overhangs of a variety of RNA species, leaving a one or two nucleotide 3' overhang. Responsible for the end-turnover of tRNA: specifically removes the terminal AMP residue from uncharged tRNA (tRNA-C-C-A). Also appears to be involved in tRNA biosynthesis. This chain is Ribonuclease T, found in Citrobacter koseri (strain ATCC BAA-895 / CDC 4225-83 / SGSC4696).